The chain runs to 379 residues: UDP-N-acetylglucosamine--N-acetylmuramyl-(pentapeptide) pyrophosphoryl-undecaprenol N-acetylglucosamine transferase (379 aa).

UDP-N-acetyl-alpha-D-glucosamine contacts are provided by residues 17 to 19, asparagine 128, arginine 169, serine 197, and glutamine 298; that span reads TGG.

The protein belongs to the glycosyltransferase 28 family. MurG subfamily.

Its subcellular location is the cell inner membrane. The enzyme catalyses di-trans,octa-cis-undecaprenyl diphospho-N-acetyl-alpha-D-muramoyl-L-alanyl-D-glutamyl-meso-2,6-diaminopimeloyl-D-alanyl-D-alanine + UDP-N-acetyl-alpha-D-glucosamine = di-trans,octa-cis-undecaprenyl diphospho-[N-acetyl-alpha-D-glucosaminyl-(1-&gt;4)]-N-acetyl-alpha-D-muramoyl-L-alanyl-D-glutamyl-meso-2,6-diaminopimeloyl-D-alanyl-D-alanine + UDP + H(+). The protein operates within cell wall biogenesis; peptidoglycan biosynthesis. Functionally, cell wall formation. Catalyzes the transfer of a GlcNAc subunit on undecaprenyl-pyrophosphoryl-MurNAc-pentapeptide (lipid intermediate I) to form undecaprenyl-pyrophosphoryl-MurNAc-(pentapeptide)GlcNAc (lipid intermediate II). This Brucella melitensis biotype 2 (strain ATCC 23457) protein is UDP-N-acetylglucosamine--N-acetylmuramyl-(pentapeptide) pyrophosphoryl-undecaprenol N-acetylglucosamine transferase.